A 618-amino-acid polypeptide reads, in one-letter code: Uptake hydrogenase large subunit (618 aa).

Positions 75, 78, 597, and 600 each coordinate Ni(2+).

This sequence belongs to the [NiFe]/[NiFeSe] hydrogenase large subunit family. Heterodimer of a large and a small subunit. It depends on Ni(2+) as a cofactor.

The protein localises to the cell membrane. The catalysed reaction is H2 + A = AH2. In terms of biological role, this enzyme recycles the H(2) produced by nitrogenase to increase the production of ATP and to protect nitrogenase against inhibition or damage by O(2) under carbon- or phosphate-limited conditions. The protein is Uptake hydrogenase large subunit (hupB) of Rubrivivax gelatinosus (Rhodocyclus gelatinosus).